The primary structure comprises 427 residues: Inward rectifier potassium channel 2 (427 aa).

The Cytoplasmic portion of the chain corresponds to Met-1–Trp-81. Cys-76 is subject to S-nitrosocysteine. The helical transmembrane segment at Arg-82–Ile-106 threads the bilayer. Residues Ala-107–Ser-128 are Extracellular-facing. The helical; Pore-forming intramembrane region spans Phe-129–Gln-140. Positions Thr-141 to Phe-147 form an intramembrane region, pore-forming. A Selectivity filter motif is present at residues Thr-142–Phe-147. At Arg-148–Ile-156 the chain is on the extracellular side. The helical transmembrane segment at Ala-157–Ala-178 threads the bilayer. Topologically, residues Val-179 to Ile-427 are cytoplasmic. The interval Ala-181–Leu-208 is polyphosphoinositide (PIP2)-binding. Residues Ser-384–Ile-427 form a disordered region. Residues Ser-425–Ile-427 carry the PDZ-binding motif.

The protein belongs to the inward rectifier-type potassium channel (TC 1.A.2.1) family. KCNJ2 subfamily. In terms of assembly, homotetramer. Homomultimeric and heteromultimeric association with KCNJ4/Kir2.3. Can form heteromeric channels with Kir2.6/KCNJ18. Associates, via its PDZ-recognition domain, with a complex containing LIN7A, LIN7B, LIN7C, DLG1, CASK and APBA1. Post-translationally, S-nitrosylation increases the open probability and inward rectifying currents.

Its subcellular location is the cell membrane. It localises to the sarcolemma. The protein resides in the T-tubule. It carries out the reaction K(+)(in) = K(+)(out). With respect to regulation, activated by phosphatidylinositol 4,5 biphosphate (PtdIns(4,5)P2). In terms of biological role, inward rectifier potassium channels are characterized by a greater tendency to allow potassium to flow into the cell rather than out of it. Their voltage dependence is regulated by the concentration of extracellular potassium; as external potassium is raised, the voltage range of the channel opening shifts to more positive voltages. The inward rectification is mainly due to the blockage of outward current by internal magnesium. Can be blocked by extracellular barium and cesium. Probably participates in establishing action potential waveform and excitability of neuronal and muscle tissues. The sequence is that of Inward rectifier potassium channel 2 (KCNJ2) from Sus scrofa (Pig).